Here is a 132-residue protein sequence, read N- to C-terminus: Myelin P2 protein (132 aa).

At S2 the chain carries N-acetylserine. R107 serves as a coordination point for (9Z)-octadecenoate. A hexadecanoate-binding site is contributed by R107. C118 and C125 are disulfide-bonded. 127-129 contributes to the (9Z)-octadecenoate binding site; that stretch reads RIY. Hexadecanoate is bound at residue 127–129; it reads RIY.

Belongs to the calycin superfamily. Fatty-acid binding protein (FABP) family. Monomer.

The protein localises to the cytoplasm. Its function is as follows. May play a role in lipid transport protein in Schwann cells. May bind cholesterol. This Sus scrofa (Pig) protein is Myelin P2 protein.